A 671-amino-acid polypeptide reads, in one-letter code: Probable potassium transport system protein Kup 2 (671 aa).

12 helical membrane-spanning segments follow: residues 18 to 38 (GFLIALGIVYGDIGTSPLYAM), 60 to 80 (VSLVIWTLTLITTVKYVLIAL), 103 to 123 (WLIIPAMIGGATLLADGALTP), 146 to 166 (AVMVTTLIILAFLFLIQRFGA), 173 to 193 (FGPIMFIWFGFLGVSGLINSF), 218 to 238 (AGFFILGSIFLVTTGAEALYS), 252 to 272 (WPFVKICIILSYCGQGAWLLA), 292 to 312 (MVIYVVILSTLAAIIASQALI), 343 to 363 (LYIPAVNFALWVTTSFFVLYF), 373 to 393 (YSLAITITMLMTTTLLTYFLI), 402 to 422 (IAIISIGLFCIEGSFFAASLV), and 424 to 444 (FINGAYIVVLIALAIIFVMFI).

Belongs to the HAK/KUP transporter (TC 2.A.72) family.

It localises to the cell membrane. The enzyme catalyses K(+)(in) + H(+)(in) = K(+)(out) + H(+)(out). In terms of biological role, transport of potassium into the cell. Likely operates as a K(+):H(+) symporter. The protein is Probable potassium transport system protein Kup 2 of Lactococcus lactis subsp. lactis (strain IL1403) (Streptococcus lactis).